The chain runs to 238 residues: 3-dehydroquinate dehydratase (238 aa).

Residues 35–37 (ELR) and arginine 70 contribute to the 3-dehydroquinate site. Histidine 133 (proton donor/acceptor) is an active-site residue. Lysine 160 (schiff-base intermediate with substrate) is an active-site residue. 2 residues coordinate 3-dehydroquinate: arginine 202 and glutamine 225.

The protein belongs to the type-I 3-dehydroquinase family. In terms of assembly, homodimer.

It carries out the reaction 3-dehydroquinate = 3-dehydroshikimate + H2O. Its pathway is metabolic intermediate biosynthesis; chorismate biosynthesis; chorismate from D-erythrose 4-phosphate and phosphoenolpyruvate: step 3/7. In terms of biological role, involved in the third step of the chorismate pathway, which leads to the biosynthesis of aromatic amino acids. Catalyzes the cis-dehydration of 3-dehydroquinate (DHQ) and introduces the first double bond of the aromatic ring to yield 3-dehydroshikimate. The protein is 3-dehydroquinate dehydratase of Staphylococcus aureus (strain MRSA252).